The primary structure comprises 255 residues: 5-oxoprolinase subunit A (255 aa).

This sequence belongs to the LamB/PxpA family. As to quaternary structure, forms a complex composed of PxpA, PxpB and PxpC.

The enzyme catalyses 5-oxo-L-proline + ATP + 2 H2O = L-glutamate + ADP + phosphate + H(+). Functionally, catalyzes the cleavage of 5-oxoproline to form L-glutamate coupled to the hydrolysis of ATP to ADP and inorganic phosphate. This is 5-oxoprolinase subunit A from Pyrococcus furiosus (strain ATCC 43587 / DSM 3638 / JCM 8422 / Vc1).